An 802-amino-acid polypeptide reads, in one-letter code: Lon protease (802 aa).

The region spanning 17 to 211 is the Lon N-terminal domain; sequence SIVMPLFEVV…LFLHILTKHK (195 aa). 363–370 contacts ATP; it reads GPPGTGKT. In terms of domain architecture, Lon proteolytic spans 600–780; it reads ENVPGVVTGL…EEVLREALDI (181 aa). Catalysis depends on residues Ser686 and Lys729.

This sequence belongs to the peptidase S16 family. As to quaternary structure, homohexamer. Organized in a ring with a central cavity.

The protein resides in the cytoplasm. It carries out the reaction Hydrolysis of proteins in presence of ATP.. In terms of biological role, ATP-dependent serine protease that mediates the selective degradation of mutant and abnormal proteins as well as certain short-lived regulatory proteins. Required for cellular homeostasis and for survival from DNA damage and developmental changes induced by stress. Degrades polypeptides processively to yield small peptide fragments that are 5 to 10 amino acids long. Binds to DNA in a double-stranded, site-specific manner. This Methanosarcina barkeri (strain Fusaro / DSM 804) protein is Lon protease.